The chain runs to 269 residues: uncharacterized protein (269 aa).

The segment covering 1–12 (MSKRTNNKKRKH) has biased composition (basic residues). The segment at 1–82 (MSKRTNNKKR…KKKENGNENV (82 aa)) is disordered. Residues 21–33 (PENQDENQDEEFL) show a composition bias toward acidic residues. The span at 34–63 (EDKNKDKNQNKNKDKNKNKDMNKNKNKDMN) shows a compositional bias: basic and acidic residues.

This is an uncharacterized protein from Dictyostelium discoideum (Social amoeba).